The chain runs to 442 residues: Thymidine phosphorylase (442 aa).

The protein belongs to the thymidine/pyrimidine-nucleoside phosphorylase family. Homodimer.

It carries out the reaction thymidine + phosphate = 2-deoxy-alpha-D-ribose 1-phosphate + thymine. The protein operates within pyrimidine metabolism; dTMP biosynthesis via salvage pathway; dTMP from thymine: step 1/2. Functionally, the enzymes which catalyze the reversible phosphorolysis of pyrimidine nucleosides are involved in the degradation of these compounds and in their utilization as carbon and energy sources, or in the rescue of pyrimidine bases for nucleotide synthesis. The polypeptide is Thymidine phosphorylase (Pectobacterium atrosepticum (strain SCRI 1043 / ATCC BAA-672) (Erwinia carotovora subsp. atroseptica)).